Reading from the N-terminus, the 426-residue chain is Serine--tRNA ligase (426 aa).

A compositionally biased stretch (basic and acidic residues) spans 1-15 (MIDVKDLSENPDKFR). Positions 1–22 (MIDVKDLSENPDKFRASQRARG) are disordered. 228–230 (TSE) is a binding site for L-serine. ATP-binding positions include 259 to 261 (RRE) and V275. Residue E282 participates in L-serine binding. 346–349 (ELTS) contributes to the ATP binding site. T386 contacts L-serine.

It belongs to the class-II aminoacyl-tRNA synthetase family. Type-1 seryl-tRNA synthetase subfamily. In terms of assembly, homodimer. The tRNA molecule binds across the dimer.

The protein localises to the cytoplasm. The enzyme catalyses tRNA(Ser) + L-serine + ATP = L-seryl-tRNA(Ser) + AMP + diphosphate + H(+). The catalysed reaction is tRNA(Sec) + L-serine + ATP = L-seryl-tRNA(Sec) + AMP + diphosphate + H(+). It functions in the pathway aminoacyl-tRNA biosynthesis; selenocysteinyl-tRNA(Sec) biosynthesis; L-seryl-tRNA(Sec) from L-serine and tRNA(Sec): step 1/1. Its function is as follows. Catalyzes the attachment of serine to tRNA(Ser). Is also able to aminoacylate tRNA(Sec) with serine, to form the misacylated tRNA L-seryl-tRNA(Sec), which will be further converted into selenocysteinyl-tRNA(Sec). This is Serine--tRNA ligase from Pseudarthrobacter chlorophenolicus (strain ATCC 700700 / DSM 12829 / CIP 107037 / JCM 12360 / KCTC 9906 / NCIMB 13794 / A6) (Arthrobacter chlorophenolicus).